A 525-amino-acid polypeptide reads, in one-letter code: MAARKAKHAFRSQATQSDAERQDLDSKLAAVLESRGNANAVFDILEHLESKKEDVVQAAIRTTSKLFEVLLEKRELYIGDLPAEDDSPPDTCSAEDKYKMWMRNRYNSCVSCLLDLLQYSSFSVQELVLCTLMKFIQLEGKFPLENSEWRDSYRFPRELLKFVVDNLLQEEADCTLLITRFQEYLEYDDVRYYTMTVTTECVSRIQQKNKQVLPPVFQTNVFCLLSSINMPVEESTLGNFLVTKNENHEEWKPSKLKEQKRVFERVWMSFLKHQLSVSLYKKVLLILHESILPHMSKPSLMIDFLTAAYDVGGAISLLALNGLFILIHQHNLEYPDFYKKLYSLLEPSVFHVKYRARFFHLANLFLSSTHLPVYLVAAFAKRLARLALTAPPQVLLMIIPFICNLIRRHPACRVLIHRPSAGDLVTDPYIMEEQDPAKSQALESCLWELEVLQQHYHGDVVRAANVISRALSAQESDVSGLLEMSSCELFDKEMKKKFKSVPLEYEPVRGLLGLKSDITAEHFTF.

Residues 1-10 show a composition bias toward basic residues; that stretch reads MAARKAKHAF. Residues 1–21 form a disordered region; that stretch reads MAARKAKHAFRSQATQSDAER. 3 consecutive transmembrane segments (helical) span residues 307–327, 358–378, and 386–406; these read AAYD…FILI, FFHL…LVAA, and LALT…CNLI.

Belongs to the CBF/MAK21 family.

It is found in the nucleus membrane. The protein resides in the nucleus. Its subcellular location is the nucleolus. This chain is Nucleolar complex protein 4 homolog B (noc4l-b), found in Xenopus laevis (African clawed frog).